Reading from the N-terminus, the 145-residue chain is Large ribosomal subunit protein uL13 (145 aa).

The protein belongs to the universal ribosomal protein uL13 family. In terms of assembly, part of the 50S ribosomal subunit.

Functionally, this protein is one of the early assembly proteins of the 50S ribosomal subunit, although it is not seen to bind rRNA by itself. It is important during the early stages of 50S assembly. The chain is Large ribosomal subunit protein uL13 from Exiguobacterium sibiricum (strain DSM 17290 / CCUG 55495 / CIP 109462 / JCM 13490 / 255-15).